Here is a 208-residue protein sequence, read N- to C-terminus: Probable GTP-binding protein EngB (208 aa).

The 170-residue stretch at 18–187 (KQFEICVIGR…FALMKKVVIE (170 aa)) folds into the EngB-type G domain. GTP is bound by residues 26 to 33 (GRSNVGKS), 52 to 56 (GRTQL), 69 to 72 (DLPG), 135 to 138 (NKVD), and 166 to 168 (VSA). The Mg(2+) site is built by serine 33 and threonine 54.

It belongs to the TRAFAC class TrmE-Era-EngA-EngB-Septin-like GTPase superfamily. EngB GTPase family. Requires Mg(2+) as cofactor.

In terms of biological role, necessary for normal cell division and for the maintenance of normal septation. The protein is Probable GTP-binding protein EngB of Ureaplasma urealyticum serovar 10 (strain ATCC 33699 / Western).